The primary structure comprises 192 residues: MESLGRKVKEDGVVIDEKILKVDGFLNHQIDAKLMNDVGKTFYESFKDAGITKILTIEASGIAPAIMASFHFDVPCLFAKKAKPSTLKDGFYSTDIHSFTKNKTSTVIVSEEFLGADDKVLIIDDFLANGDASLGLNDIVKQANATTVGVGIVVEKSFQNGRQRLEDAGLYVSSLCKVASLKGNKVTLLGEA.

Residues Leu20 and Asn27 each coordinate xanthine. 128 to 132 (ANGDA) serves as a coordination point for 5-phospho-alpha-D-ribose 1-diphosphate. Residue Lys156 coordinates xanthine.

It belongs to the purine/pyrimidine phosphoribosyltransferase family. Xpt subfamily. As to quaternary structure, homodimer.

Its subcellular location is the cytoplasm. It catalyses the reaction XMP + diphosphate = xanthine + 5-phospho-alpha-D-ribose 1-diphosphate. It functions in the pathway purine metabolism; XMP biosynthesis via salvage pathway; XMP from xanthine: step 1/1. Converts the preformed base xanthine, a product of nucleic acid breakdown, to xanthosine 5'-monophosphate (XMP), so it can be reused for RNA or DNA synthesis. The sequence is that of Xanthine phosphoribosyltransferase from Staphylococcus epidermidis (strain ATCC 35984 / DSM 28319 / BCRC 17069 / CCUG 31568 / BM 3577 / RP62A).